We begin with the raw amino-acid sequence, 1359 residues long: Tripeptidyl-peptidase 2 (1359 aa).

The disordered stretch occupies residues 45 to 81; it reads AASTTTRGGPSPSAGVAPRAMPSSSSSPPSAAEGTTA. Over residues 64–81 the composition is skewed to low complexity; it reads AMPSSSSSPPSAAEGTTA. Residues 102 to 600 form the Peptidase S8 domain; sequence EIGVDRFLAA…HGLLQVDRAF (499 aa). Active-site charge relay system residues include aspartate 126, histidine 353, and serine 539.

The protein belongs to the peptidase S8 family.

It carries out the reaction Release of an N-terminal tripeptide from a polypeptide.. In terms of biological role, serine protease that may function in the proteasome pathway. The polypeptide is Tripeptidyl-peptidase 2 (TPP2) (Oryza sativa subsp. japonica (Rice)).